We begin with the raw amino-acid sequence, 268 residues long: Probable chemotaxis protein methyltransferase (268 aa).

In terms of domain architecture, CheR-type methyltransferase spans Met1–Lys262. S-adenosyl-L-methionine-binding positions include Asn60, Thr62, Arg66, Glu104, Asp130, Asn188–Leu189, and Arg205–Asn206.

The catalysed reaction is L-glutamyl-[protein] + S-adenosyl-L-methionine = [protein]-L-glutamate 5-O-methyl ester + S-adenosyl-L-homocysteine. Functionally, methylation of the membrane-bound methyl-accepting chemotaxis proteins (MCP) to form gamma-glutamyl methyl ester residues in MCP. The polypeptide is Probable chemotaxis protein methyltransferase (cheRch1) (Rhizobium etli (strain ATCC 51251 / DSM 11541 / JCM 21823 / NBRC 15573 / CFN 42)).